The chain runs to 380 residues: cAMP-dependent protein kinase type I-alpha regulatory subunit (380 aa).

Met-1 is subject to N-acetylmethionine. At Ala-2 the chain carries N-acetylalanine; in cAMP-dependent protein kinase type I-alpha regulatory subunit, N-terminally processed. Residues 2–135 form a dimerization and phosphorylation region; it reads ASGTTASEEE…ALAKAIEKNV (134 aa). Ser-3, Ser-76, and Ser-82 each carry phosphoserine. Residues 64-96 form a disordered region; sequence IQNLQKAGSRADSREDEISPPPPNPVVKGRRRR. The Pseudophosphorylation motif signature appears at 95–99; it reads RRGAI. The residue at position 100 (Ser-100) is a Phosphoserine. 3',5'-cyclic AMP-binding positions include 136–253, Glu-201, Arg-210, 254–380, Glu-325, and Arg-334; these read LFSH…SKVS and ILES…SLSV. At Ser-257 the chain carries Phosphoserine.

The protein belongs to the cAMP-dependent kinase regulatory chain family. The inactive holoenzyme is composed of two regulatory chains and two catalytic chains. Activation by cAMP releases the two active catalytic monomers and the regulatory dimer. Interacts with PRKACA and PRKACB. PRKAR1A also interacts with RFC2; the complex may be involved in cell survival. Interacts with AKAP4. Interacts with RARA; the interaction occurs in the presence of cAMP or FSH and regulates RARA transcriptional activity. Interacts with the phosphorylated form of PJA2. Interacts with CBFA2T3. Interacts with PRKX; regulates this cAMP-dependent protein kinase. Interacts with smAKAP; this interaction may target PRKAR1A to the plasma membrane. Interacts with AICDA. Post-translationally, the pseudophosphorylation site binds to the substrate-binding region of the catalytic chain, resulting in the inhibition of its activity. The physiological significance of the in vitro phosphorylation of a proximal serine is unclear. As to expression, four types of regulatory chains are found: I-alpha, I-beta, II-alpha, and II-beta. Their expression varies among tissues and is in some cases constitutive and in others inducible.

The protein localises to the cell membrane. Functionally, regulatory subunit of the cAMP-dependent protein kinases involved in cAMP signaling in cells. This chain is cAMP-dependent protein kinase type I-alpha regulatory subunit (PRKAR1A), found in Bos taurus (Bovine).